A 125-amino-acid polypeptide reads, in one-letter code: uncharacterized protein (125 aa).

The Cupin type-2 domain occupies 45–110 (IVPVGSKTLL…IGNVPLKILC (66 aa)).

This is an uncharacterized protein from Methanocaldococcus jannaschii (strain ATCC 43067 / DSM 2661 / JAL-1 / JCM 10045 / NBRC 100440) (Methanococcus jannaschii).